Reading from the N-terminus, the 502-residue chain is Smr domain-containing protein C1235.03 (502 aa).

Positions 150-184 (LITSNIGHRSRQRKKKTKKATNSRKPLSKFQSNTE) are disordered. Residues 157–171 (HRSRQRKKKTKKATN) show a composition bias toward basic residues. One can recognise a Smr domain in the interval 411-459 (SLDLHGATVREAKTIVRERVAAWWAKEADTSPNSIRPFVIVTGRGNHSI).

It localises to the nucleus. It is found in the nucleolus. This Schizosaccharomyces pombe (strain 972 / ATCC 24843) (Fission yeast) protein is Smr domain-containing protein C1235.03.